The following is a 274-amino-acid chain: MAIVKCKPTSPGRRGVVKIVNSDLHKGKPFAGLLAKKSKTGGRNNTGRITTRHVGGGHKQHYRLIDFKRNKDGIPGKIERLEYDPNRTANIALVLYADGERRYILAAKGMQAGDKVVSGIDADIKVGNALPLRNIPVGSVVHAVEMKPGKGAQIARSAGAYVQVVARDGEYATLRLRSGEMRKVPVDCRATLGEVGNAEHMLRQLGKAGAKRWRGVRPTVRGVAMNPVDHPHGGGEGRTSGGRHPVTPWGVPTKGYKTRSNKRTDKYIVRRRTK.

The disordered stretch occupies residues 223–274; it reads VAMNPVDHPHGGGEGRTSGGRHPVTPWGVPTKGYKTRSNKRTDKYIVRRRTK.

The protein belongs to the universal ribosomal protein uL2 family. As to quaternary structure, part of the 50S ribosomal subunit. Forms a bridge to the 30S subunit in the 70S ribosome.

In terms of biological role, one of the primary rRNA binding proteins. Required for association of the 30S and 50S subunits to form the 70S ribosome, for tRNA binding and peptide bond formation. It has been suggested to have peptidyltransferase activity; this is somewhat controversial. Makes several contacts with the 16S rRNA in the 70S ribosome. The polypeptide is Large ribosomal subunit protein uL2 (Shewanella amazonensis (strain ATCC BAA-1098 / SB2B)).